Here is a 218-residue protein sequence, read N- to C-terminus: MAMITRNTATRLPLLLQSQRAVAAASVSHLHTSLPALSPSTSPTSYTRPGPPSTSPPPPGLSKAAEFVISKVDDLMNWARTGSIWPMTFGLACCAVEMMHTGAARYDLDRFGIIFRPSPRQSDCMIVAGTLTNKMAPALRKVYDQMPEPRWVISMGSCANGGGYYHYSYSVVRGCDRIVPVDIYVPGCPPTAEALLYGLLQLQKKINRRKDFLHWWNK.

Residues 34–48 (LPALSPSTSPTSYTR) are compositionally biased toward low complexity. Positions 34–61 (LPALSPSTSPTSYTRPGPPSTSPPPPGL) are disordered. Over residues 49–60 (PGPPSTSPPPPG) the composition is skewed to pro residues. The [4Fe-4S] cluster site is built by Cys93, Cys94, Cys158, and Cys188.

It belongs to the complex I 20 kDa subunit family. Complex I is composed of at least 49 different subunits. This is a component of the iron-sulfur (IP) fragment of the enzyme. It depends on [4Fe-4S] cluster as a cofactor.

The protein resides in the mitochondrion. The enzyme catalyses a ubiquinone + NADH + 5 H(+)(in) = a ubiquinol + NAD(+) + 4 H(+)(out). Core subunit of the mitochondrial membrane respiratory chain NADH dehydrogenase (Complex I) that is believed to belong to the minimal assembly required for catalysis. Complex I functions in the transfer of electrons from NADH to the respiratory chain. The immediate electron acceptor for the enzyme is believed to be ubiquinone. This Arabidopsis thaliana (Mouse-ear cress) protein is NADH dehydrogenase [ubiquinone] iron-sulfur protein 7, mitochondrial.